Consider the following 464-residue polypeptide: Argininosuccinate lyase (464 aa).

Ala-2 bears the N-acetylalanine mark. Lys-7 carries the N6-acetyllysine modification. Ser-27 lines the 2-(N(omega)-L-arginino)succinate pocket. Lys-69 is subject to N6-acetyllysine. Residues Asn-114 and Thr-159 each contribute to the 2-(N(omega)-L-arginino)succinate site. Catalysis depends on His-160, which acts as the Proton acceptor. Catalysis depends on Ser-281, which acts as the Proton donor. N6-acetyllysine is present on Lys-288. 2-(N(omega)-L-arginino)succinate is bound by residues Asn-289, Tyr-321, Gln-326, and Lys-329.

This sequence belongs to the lyase 1 family. Argininosuccinate lyase subfamily. Homotetramer. Forms tissue-specific complexes with ASS1, SLC7A1, HSP90AA1 and nitric oxide synthase NOS1, NOS2 or NOS3; the complex maintenance is independent of ASL catalytic function. In terms of processing, acetylation modifies enzyme activity in response to alterations of extracellular nutrient availability. Acetylation increased with trichostin A (TSA) or with nicotinamide (NAM). Glucose increases acetylation by about a factor of 3 with decreasing enzyme activity. Acetylation on Lys-288 is decreased on the addition of extra amino acids resulting in activation of enzyme activity. As to expression, expressed in lung and brain (at protein level).

It catalyses the reaction 2-(N(omega)-L-arginino)succinate = fumarate + L-arginine. Its pathway is amino-acid biosynthesis; L-arginine biosynthesis; L-arginine from L-ornithine and carbamoyl phosphate: step 3/3. It participates in nitrogen metabolism; urea cycle; L-arginine and fumarate from (N(omega)-L-arginino)succinate: step 1/1. Its activity is regulated as follows. Enzyme activity is regulated by acetylation. Catalyzes the reversible cleavage of L-argininosuccinate to fumarate and L-arginine, an intermediate step reaction in the urea cycle mostly providing for hepatic nitrogen detoxification into excretable urea as well as de novo L-arginine synthesis in nonhepatic tissues. Essential regulator of intracellular and extracellular L-arginine pools. As part of citrulline-nitric oxide cycle, forms tissue-specific multiprotein complexes with argininosuccinate synthase ASS1, transport protein SLC7A1 and nitric oxide synthase NOS1, NOS2 or NOS3, allowing for cell-autonomous L-arginine synthesis while channeling extracellular L-arginine to nitric oxide synthesis pathway. The sequence is that of Argininosuccinate lyase (Asl) from Mus musculus (Mouse).